The chain runs to 1391 residues: DNA-directed RNA polymerase subunit beta'' (1391 aa).

Residues Cys224, Cys295, Cys302, and Cys305 each contribute to the Zn(2+) site.

The protein belongs to the RNA polymerase beta' chain family. RpoC2 subfamily. In terms of assembly, in plastids the minimal PEP RNA polymerase catalytic core is composed of four subunits: alpha, beta, beta', and beta''. When a (nuclear-encoded) sigma factor is associated with the core the holoenzyme is formed, which can initiate transcription. Zn(2+) is required as a cofactor.

Its subcellular location is the plastid. It is found in the chloroplast. It carries out the reaction RNA(n) + a ribonucleoside 5'-triphosphate = RNA(n+1) + diphosphate. DNA-dependent RNA polymerase catalyzes the transcription of DNA into RNA using the four ribonucleoside triphosphates as substrates. In Buxus microphylla (Littleleaf boxwood), this protein is DNA-directed RNA polymerase subunit beta''.